The chain runs to 619 residues: Frizzled and smoothened-like protein L (619 aa).

The N-terminal stretch at 1-24 (MITNKSKYYFFLILIFINFYLINC) is a signal peptide. Residues Asn4, Asn63, Asn112, Asn143, Asn159, Asn184, and Asn203 are each glycosylated (N-linked (GlcNAc...) asparagine). Residues 25–245 (QEEYPIDQTG…KQWDRLYDLS (221 aa)) are Extracellular-facing. Residues 31–169 (DQTGKCEPYI…YSIYDLSLVN (139 aa)) form the FZ domain. 2 disulfide bridges follow: Cys36-Cys106 and Cys48-Cys99. The chain crosses the membrane as a helical span at residues 246–266 (NSLSVLSCVGTLFLLFTFNIL). The Cytoplasmic segment spans residues 267–278 (NKKINRFDRMNS). The chain crosses the membrane as a helical span at residues 279–299 (LFNGSVFMMSLSGVIILFAGG). Over 300 to 321 (PRALIKDGGARISVWQDPLCSA) the chain is Extracellular. Residues 322 to 342 (TGFIFQLFSIAAILFWVVMSF) traverse the membrane as a helical segment. Over 343 to 358 (ELWYKIKFMTKKLDLK) the chain is Cytoplasmic. The helical transmembrane segment at 359–379 (KYYIPFIIIVSLVFSIIPLAT) threads the bilayer. Topologically, residues 380-402 (KNYRMIRGNMHCWVHTTKLQNSL) are extracellular. The helical transmembrane segment at 403 to 423 (FWIPLGIAITIGTIFIGLVMF) threads the bilayer. At 424–444 (EIHRIVSANSKGGVLKLEIKS) the chain is on the cytoplasmic side. A helical transmembrane segment spans residues 445–465 (ILNVALIYLTFIYLFAFNFYM). Over 466–497 (NGQEGVVYGQIESFYQCTLENDASECTIQGPS) the chain is Extracellular. Residues 498–518 (IGSLGFFIFCIRIYGVYCFIL) form a helical membrane-spanning segment. The Cytoplasmic segment spans residues 519–619 (QGLNYRAYNI…TLKDIEVSKS (101 aa)). The disordered stretch occupies residues 581–605 (LNIDSAFSKNNESDDEDDYDPYKKS).

This sequence belongs to the G-protein coupled receptor Fz/Smo family.

The protein localises to the membrane. The protein is Frizzled and smoothened-like protein L (fslL) of Dictyostelium discoideum (Social amoeba).